The following is a 314-amino-acid chain: Lysophospholipase D GDPD1 (314 aa).

The Extracellular portion of the chain corresponds to 1 to 3 (MSS). Residues 4–24 (TAAFCLLSTLGGYLVTSFLLL) traverse the membrane as a helical segment. Residues 25–195 (KYPALLHQRK…VDKCYKENSD (171 aa)) are Cytoplasmic-facing. A GP-PDE domain is found at 40-309 (SRHISHRGGA…DYPTKLKDFL (270 aa)). A divalent metal cation contacts are provided by Glu72, Asp74, and His87. A helical transmembrane segment spans residues 196-216 (IPILFSLQRVLLILGLFFTGL). The Extracellular portion of the chain corresponds to 217 to 314 (LPFVPIREQF…LKDFLNNFSA (98 aa)).

It belongs to the glycerophosphoryl diester phosphodiesterase family. In terms of tissue distribution, widely expressed.

It localises to the cytoplasm. It is found in the membrane. The protein localises to the perinuclear region. Its subcellular location is the endoplasmic reticulum. It catalyses the reaction 1-hexadecanoyl-sn-glycero-3-phosphocholine + H2O = 1-hexadecanoyl-sn-glycero-3-phosphate + choline + H(+). The enzyme catalyses 1-hexadecanoyl-sn-glycero-3-phosphoethanolamine + H2O = 1-hexadecanoyl-sn-glycero-3-phosphate + ethanolamine + H(+). The catalysed reaction is N-hexadecanoyl-sn-glycero-3-phosphoethanolamine + H2O = N-hexadecanoylethanolamine + sn-glycerol 3-phosphate + H(+). It carries out the reaction N-(5Z,8Z,11Z,14Z-eicosatetraenoyl)-1-(9Z-octadecenoyl)-sn-glycero-3-phosphoethanolamine + H2O = N-(5Z,8Z,11Z,14Z-eicosatetraenoyl)-ethanolamine + 1-(9Z-octadecenoyl)-sn-glycero-3-phosphate + H(+). It catalyses the reaction N,1-di-(9Z-octadecenoyl)-sn-glycero-3-phosphoethanolamine + H2O = N-(9Z-octadecenoyl) ethanolamine + 1-(9Z-octadecenoyl)-sn-glycero-3-phosphate + H(+). The enzyme catalyses N-hexadecanoyl-1-(9Z-octadecenoyl)-sn-glycero-3-phosphoethanolamine + H2O = N-hexadecanoylethanolamine + 1-(9Z-octadecenoyl)-sn-glycero-3-phosphate + H(+). The catalysed reaction is a 1-O-alkyl-sn-glycero-3-phosphocholine + H2O = a 1-O-alkyl-sn-glycero-3-phosphate + choline + H(+). It carries out the reaction 1-O-hexadecyl-sn-glycero-3-phosphocholine + H2O = 1-O-hexadecyl-sn-glycero-3-phosphate + choline + H(+). It catalyses the reaction 1-(9Z-octadecenoyl)-sn-glycero-3-phosphocholine + H2O = 1-(9Z-octadecenoyl)-sn-glycero-3-phosphate + choline + H(+). The enzyme catalyses N,1-dihexadecanoyl-sn-glycero-3-phosphoethanolamine + H2O = N-hexadecanoylethanolamine + 1-hexadecanoyl-sn-glycero-3-phosphate + H(+). The catalysed reaction is 1-O-(1Z-octadecenyl)-sn-glycero-3-phospho-(N-5Z,8Z,11Z,14Z-eicosatetraenoyl)-ethanolamine + H2O = 1-O-(1Z-octadecenyl)-sn-glycero-3-phosphate + N-(5Z,8Z,11Z,14Z-eicosatetraenoyl)-ethanolamine + H(+). It carries out the reaction 1-O-(1Z-octadecenyl)-sn-glycero-3-phospho-(N-9Z-octadecenoyl)-ethanolamine + H2O = 1-O-(1Z-octadecenyl)-sn-glycero-3-phosphate + N-(9Z-octadecenoyl) ethanolamine + H(+). It catalyses the reaction 1-O-(1Z-octadecenyl)-sn-glycero-3-phospho-N-hexadecanoyl-ethanolamine + H2O = 1-O-(1Z-octadecenyl)-sn-glycero-3-phosphate + N-hexadecanoylethanolamine + H(+). Its activity is regulated as follows. Lysophospholipase D activity is increased by magnesium and manganese and inhibited by calcium in a concentration dependent manner. Loss of lysophospholipase D activity by addition of EDTA. Its function is as follows. Hydrolyzes lysoglycerophospholipids to produce lysophosphatidic acid (LPA) and the corresponding amines. Shows a preference for 1-O-alkyl-sn-glycero-3-phosphocholine (lyso-PAF), lysophosphatidylethanolamine (lyso-PE) and lysophosphatidylcholine (lyso-PC). May be involved in bioactive N-acylethanolamine biosynthesis from both N-acyl-lysoplasmenylethanolamin (N-acyl-lysoPlsEt) and N-acyl-lysophosphatidylethanolamin (N-acyl-lysoPE). In addition, hydrolyzes glycerophospho-N-acylethanolamine to N-acylethanolamine. Does not display glycerophosphodiester phosphodiesterase activity, since it cannot hydrolyze either glycerophosphoinositol or glycerophosphocholine. In Mus musculus (Mouse), this protein is Lysophospholipase D GDPD1.